Reading from the N-terminus, the 172-residue chain is Cytidylate kinase (172 aa).

Residue 7–15 coordinates ATP; the sequence is GPPGSGTST.

Belongs to the cytidylate kinase family. Type 2 subfamily.

The protein localises to the cytoplasm. The enzyme catalyses CMP + ATP = CDP + ADP. The catalysed reaction is dCMP + ATP = dCDP + ADP. This is Cytidylate kinase from Methanothrix thermoacetophila (strain DSM 6194 / JCM 14653 / NBRC 101360 / PT) (Methanosaeta thermophila).